Reading from the N-terminus, the 548-residue chain is Alpha-humulene synthase (548 aa).

Residues D302, D306, and E453 each coordinate Mg(2+). A DDXXD motif motif is present at residues 302–306 (DDIYD).

The protein belongs to the terpene synthase family. As to expression, mostly expressed in rhizomes.

It catalyses the reaction (2E,6E)-farnesyl diphosphate = alpha-humulene + diphosphate. Its function is as follows. Catalyzes the formation of alpha-humulene in the first step of zerumbone biosynthesis, a highly promising multi-anticancer agent. Also mediates formation of beta-caryophyllene at a much lower level. The protein is Alpha-humulene synthase (ZSS1) of Zingiber zerumbet (Shampoo ginger).